The primary structure comprises 163 residues: Nucleotide-binding protein YajQ (163 aa).

This sequence belongs to the YajQ family.

Its function is as follows. Nucleotide-binding protein. The chain is Nucleotide-binding protein YajQ from Escherichia coli O81 (strain ED1a).